A 286-amino-acid polypeptide reads, in one-letter code: N-alpha-acetyltransferase 80 (286 aa).

Positions 33-54 (TFNPGPTELTLDPEHQPEETPA) are disordered. Residues 60–207 (LTLEPVHRRP…VFTSRRLPAT (148 aa)) enclose the N-acetyltransferase domain. Residues R85 and 90–93 (RLHS) contribute to the substrate site. Acetyl-CoA-binding positions include 141 to 143 (VVV), 149 to 154 (GRGFGR), and Q179. The interval 212–269 (FPTAPSPRPPRKAPNLTAQAAPRGPKGPPLPPPPPLPECLTISPPVPSGPPSKSLLET) is disordered. Pro residues predominate over residues 236-248 (PKGPPLPPPPPLP).

It belongs to the acetyltransferase family. Strongly expressed in heart and skeletal muscle, followed by brain and pancreas, with weak expression in kidney, liver, and lung and no expression in placenta.

The protein resides in the cytoplasm. It is found in the cytosol. It carries out the reaction N-terminal L-aspartyl-L-aspartyl-L-aspartyl-[protein] + acetyl-CoA = N-terminal N-acetyl-L-aspartyl-L-aspartyl-L-aspartyl-[protein] + CoA + H(+). The enzyme catalyses N-terminal L-glutamyl-L-glutamyl-L-glutamyl-[protein] + acetyl-CoA = N-terminal N-acetyl-L-glutamyl-L-glutamyl-L-glutamyl-[protein] + CoA + H(+). In terms of biological role, N-alpha-acetyltransferase that specifically mediates the acetylation of the acidic amino terminus of processed forms of beta- and gamma-actin (ACTB and ACTG, respectively). N-terminal acetylation of processed beta- and gamma-actin regulates actin filament depolymerization and elongation. In vivo, preferentially displays N-terminal acetyltransferase activity towards acid N-terminal sequences starting with Asp-Asp-Asp and Glu-Glu-Glu. In vitro, shows high activity towards Met-Asp-Glu-Leu and Met-Asp-Asp-Asp. May act as a tumor suppressor. This is N-alpha-acetyltransferase 80 from Homo sapiens (Human).